The primary structure comprises 290 residues: Acetyl-coenzyme A carboxylase carboxyl transferase subunit beta (290 aa).

In terms of domain architecture, CoA carboxyltransferase N-terminal spans 28-290; that stretch reads IMTKCPKCKK…SRGGDEWHTN (263 aa). Zn(2+) contacts are provided by C32, C35, C51, and C54. The C4-type zinc-finger motif lies at 32-54; sequence CPKCKKIMYTKELVKNLRVCISC.

The protein belongs to the AccD/PCCB family. Acetyl-CoA carboxylase is a heterohexamer composed of biotin carboxyl carrier protein (AccB), biotin carboxylase (AccC) and two subunits each of ACCase subunit alpha (AccA) and ACCase subunit beta (AccD). It depends on Zn(2+) as a cofactor.

The protein localises to the cytoplasm. It carries out the reaction N(6)-carboxybiotinyl-L-lysyl-[protein] + acetyl-CoA = N(6)-biotinyl-L-lysyl-[protein] + malonyl-CoA. Its pathway is lipid metabolism; malonyl-CoA biosynthesis; malonyl-CoA from acetyl-CoA: step 1/1. Functionally, component of the acetyl coenzyme A carboxylase (ACC) complex. Biotin carboxylase (BC) catalyzes the carboxylation of biotin on its carrier protein (BCCP) and then the CO(2) group is transferred by the transcarboxylase to acetyl-CoA to form malonyl-CoA. The polypeptide is Acetyl-coenzyme A carboxylase carboxyl transferase subunit beta (Anoxybacillus flavithermus (strain DSM 21510 / WK1)).